The primary structure comprises 371 residues: Cytochrome b (371 aa).

The next 4 helical transmembrane spans lie at 25–45, 69–90, 105–125, and 170–190; these read FGSM…FLAV, WMMQ…YIHI, WMSG…GYVL, and FFAL…LHVI. Heme b contacts are provided by His-75 and His-89. Residues His-174 and His-188 each coordinate heme b. Position 193 (His-193) interacts with a ubiquinone. The next 4 helical transmembrane spans lie at 218-238, 280-300, 312-332, and 339-358; these read YKDF…VSFF, LGGA…PFTH, LYQL…WAAT, and FITI…ISIP.

Belongs to the cytochrome b family. The cytochrome bc1 complex contains 3 respiratory subunits (MT-CYB, CYC1 and UQCRFS1), 2 core proteins (UQCRC1 and UQCRC2) and probably 6 low-molecular weight proteins. It depends on heme b as a cofactor.

Its subcellular location is the mitochondrion inner membrane. Component of the ubiquinol-cytochrome c reductase complex (complex III or cytochrome b-c1 complex) that is part of the mitochondrial respiratory chain. The b-c1 complex mediates electron transfer from ubiquinol to cytochrome c. Contributes to the generation of a proton gradient across the mitochondrial membrane that is then used for ATP synthesis. The chain is Cytochrome b (MT-CYB) from Malayopython reticulatus (Reticulate python).